The sequence spans 444 residues: Porin AaxA (444 aa).

Residues 1 to 19 form the signal peptide; that stretch reads MAFSRFYLLTALYTGGILA. The segment at 42–68 is disordered; sequence KNSTQDSDSSPSESSPHPRQEPRRHVL. The span at 46 to 56 shows a compositional bias: low complexity; it reads QDSDSSPSESS.

It belongs to the OprB family.

Its subcellular location is the cell outer membrane. Functionally, facilitates L-arginine uptake, as part of the AaxABC system. The arginine uptake by the bacterium in the macrophage may be a virulence factor against the host innate immune response. This chain is Porin AaxA (aaxA), found in Chlamydia felis (strain Fe/C-56) (Chlamydophila felis).